Consider the following 331-residue polypeptide: DNA-directed RNA polymerase subunit alpha (331 aa).

Residues 1-242 (MEKFLRYNIQ…EHYKPIVTEL (242 aa)) form an alpha N-terminal domain (alpha-NTD) region. The segment at 258-331 (VSSSKSSLAI…RNLKLKEEQN (74 aa)) is alpha C-terminal domain (alpha-CTD).

Belongs to the RNA polymerase alpha chain family. Homodimer. The RNAP catalytic core consists of 2 alpha, 1 beta, 1 beta' and 1 omega subunit. When a sigma factor is associated with the core the holoenzyme is formed, which can initiate transcription.

It catalyses the reaction RNA(n) + a ribonucleoside 5'-triphosphate = RNA(n+1) + diphosphate. Functionally, DNA-dependent RNA polymerase catalyzes the transcription of DNA into RNA using the four ribonucleoside triphosphates as substrates. This is DNA-directed RNA polymerase subunit alpha from Malacoplasma penetrans (strain HF-2) (Mycoplasma penetrans).